The primary structure comprises 357 residues: Dual-specificity RNA methyltransferase RlmN (357 aa).

The active-site Proton acceptor is the glutamate 89. The Radical SAM core domain occupies 109–340; sequence EGEKYTVCVS…CTIRESKALD (232 aa). Cysteine 116 and cysteine 345 are oxidised to a cystine. Positions 123, 127, and 130 each coordinate [4Fe-4S] cluster. Residues 173–174, serine 203, 226–228, and asparagine 302 each bind S-adenosyl-L-methionine; these read GE and SLH. The active-site S-methylcysteine intermediate is the cysteine 345.

The protein belongs to the radical SAM superfamily. RlmN family. It depends on [4Fe-4S] cluster as a cofactor.

It is found in the cytoplasm. It catalyses the reaction adenosine(2503) in 23S rRNA + 2 reduced [2Fe-2S]-[ferredoxin] + 2 S-adenosyl-L-methionine = 2-methyladenosine(2503) in 23S rRNA + 5'-deoxyadenosine + L-methionine + 2 oxidized [2Fe-2S]-[ferredoxin] + S-adenosyl-L-homocysteine. It carries out the reaction adenosine(37) in tRNA + 2 reduced [2Fe-2S]-[ferredoxin] + 2 S-adenosyl-L-methionine = 2-methyladenosine(37) in tRNA + 5'-deoxyadenosine + L-methionine + 2 oxidized [2Fe-2S]-[ferredoxin] + S-adenosyl-L-homocysteine. Specifically methylates position 2 of adenine 2503 in 23S rRNA and position 2 of adenine 37 in tRNAs. m2A2503 modification seems to play a crucial role in the proofreading step occurring at the peptidyl transferase center and thus would serve to optimize ribosomal fidelity. This Helicobacter pylori (strain G27) protein is Dual-specificity RNA methyltransferase RlmN.